We begin with the raw amino-acid sequence, 230 residues long: Modulator of macroautophagy TMEM150B (230 aa).

A topological domain (cytoplasmic) is located at residue M1. Residues W2–V22 form a helical membrane-spanning segment. Over Y23 to Q50 the chain is Extracellular. N-linked (GlcNAc...) asparagine glycosylation is found at N29 and N33. A helical transmembrane segment spans residues S51–I71. The Cytoplasmic portion of the chain corresponds to R72–S83. The helical transmembrane segment at V84–G104 threads the bilayer. At N105–H115 the chain is on the extracellular side. Residues L116–L136 traverse the membrane as a helical segment. Over T137 to G150 the chain is Cytoplasmic. A helical transmembrane segment spans residues P151–L171. Topologically, residues K172–E183 are extracellular. Residues W184 to L204 traverse the membrane as a helical segment. The Cytoplasmic segment spans residues D205–I230.

Belongs to the DRAM/TMEM150 family.

Its subcellular location is the cell membrane. The protein localises to the endosome membrane. It is found in the cytoplasmic vesicle. It localises to the autophagosome membrane. Modulator of macroautophagy that causes accumulation of autophagosomes under basal conditions and enhances autophagic flux. Represses cell death and promotes long-term clonogenic survival of cells grown in the absence of glucose in a macroautophagy-independent manner. May have some role in extracellular matrix engulfment or growth factor receptor recycling, both of which can modulate cell survival. This Xenopus tropicalis (Western clawed frog) protein is Modulator of macroautophagy TMEM150B.